The primary structure comprises 210 residues: Large ribosomal subunit protein uL3 (210 aa).

The tract at residues 119 to 151 (FQGAIKRHGQSRGPMSHGSRYHRRPGSMGPVAP) is disordered.

This sequence belongs to the universal ribosomal protein uL3 family. In terms of assembly, part of the 50S ribosomal subunit. Forms a cluster with proteins L14 and L19.

One of the primary rRNA binding proteins, it binds directly near the 3'-end of the 23S rRNA, where it nucleates assembly of the 50S subunit. The protein is Large ribosomal subunit protein uL3 of Bacillus cytotoxicus (strain DSM 22905 / CIP 110041 / 391-98 / NVH 391-98).